A 329-amino-acid chain; its full sequence is Phosphatidylcholine:ceramide cholinephosphotransferase 3 (329 aa).

At 1–26 (MAVPPVEMYSGSFWNRMRKPLPLRTQ) the chain is on the cytoplasmic side. A helical transmembrane segment spans residues 27–47 (VIRFTVVFVIVSFILAVALQI). The Extracellular portion of the chain corresponds to 48 to 74 (THERMPDPKVTKPLPDLGFELLTKVPG). Residues 75-95 (MYVLADCCIGFLNILSVFTAF) form a helical membrane-spanning segment. Topologically, residues 96 to 147 (KLYLLHRHCVGSGEPELPCNIPGVSRFFLSVWLCKENCRIELRNIHTIAWIR) are cytoplasmic. The helical transmembrane segment at 148–168 (FITSYALLLLFRSAVIVMTSL) threads the bilayer. Topologically, residues 169–211 (PAPDDLCQNPPKIENPVKNVILTVLTAGAGSIHCGDLMYSGHT) are extracellular. The helical transmembrane segment at 212–232 (VILTLHLMFHWIYGAMVHWSF) threads the bilayer. Residue R233 is a topological domain, cytoplasmic. Residues 234–254 (PVVTVVAIFGYYCIVASRFHY) traverse the membrane as a helical segment. Residues 255–257 (TDD) lie on the Extracellular side of the membrane. Residues 258–278 (VLVAIYLTIATFIAVGHNADG) traverse the membrane as a helical segment. Residues 279-329 (APWQLQLFIRWWPCCGANSREVTEDSQPVMVAFKSEAAGQSSRKVVDERNH) lie on the Cytoplasmic side of the membrane.

It belongs to the sphingomyelin synthase family.

Its subcellular location is the membrane. The catalysed reaction is an N-acylsphing-4-enine + a 1,2-diacyl-sn-glycero-3-phosphocholine = a sphingomyelin + a 1,2-diacyl-sn-glycerol. The enzyme catalyses an N-acylsphinganine + a 1,2-diacyl-sn-glycero-3-phosphocholine = an N-acylsphinganine-1-phosphocholine + a 1,2-diacyl-sn-glycerol. It catalyses the reaction an N-acylsphing-4-enine + a 1,2-diacyl-sn-glycero-3-phosphoethanolamine = an N-acylsphing-4-enine 1-phosphoethanolamine + a 1,2-diacyl-sn-glycerol. It carries out the reaction an N-acylsphinganine + a 1,2-diacyl-sn-glycero-3-phosphoethanolamine = an N-acylsphinganine-1-phosphoethanolamine + a 1,2-diacyl-sn-glycerol. Bifunctional sphingomyelin (SM)/ethanolamine phosphorylceramide (EPC) synthase with minimal inositol phosphorylceramide (IPC) synthase activity. Specificity is likely to be defined by residues in the lumenal catalytic domain that interact with the polar head groups of the phospholipid donors. SM is synthesized by both stages of the parasite life cycle, bloodstream forms (BSF) and procyclic forms (PCF), by transferring the phosphocholine from a 1,2-diacyl-sn-glycero-3-phosphocholine to an N-acylsphing-4-enine (ceramide) or an N-acylsphinganine (dihydroceramide). Similarly, EPC is synthesized by transferring phosphoethanolamine from a 1,2-diacyl-sn-glycero-3-phosphoethanolamine to ceramide or dihydroceramide by BSF and PCF, while IPC is confined to PCF. The ceramide/dihydroceramide ratios are skewed towards dihydroceramide in PCF parasites and ceramide in BSF parasites, this is likely due to differential expression and/or regulation of dihydroceramide desaturase, the enzyme responsible for converting dihydroceramide to ceramide. The protein is Phosphatidylcholine:ceramide cholinephosphotransferase 3 of Trypanosoma brucei brucei.